We begin with the raw amino-acid sequence, 254 residues long: Alcohol dehydrogenase (254 aa).

10-33 (FVAGLGGIGLDTNREIVKSGPKNL) contributes to the NAD(+) binding site. Ser138 provides a ligand contact to substrate. Tyr151 serves as the catalytic Proton acceptor.

It belongs to the short-chain dehydrogenases/reductases (SDR) family. Homodimer.

The catalysed reaction is a primary alcohol + NAD(+) = an aldehyde + NADH + H(+). It catalyses the reaction a secondary alcohol + NAD(+) = a ketone + NADH + H(+). This is Alcohol dehydrogenase (Adh) from Scaptomyza albovittata (Fruit fly).